Here is a 353-residue protein sequence, read N- to C-terminus: Photosystem II protein D1 (353 aa).

Threonine 2 bears the N-acetylthreonine mark. Threonine 2 bears the Phosphothreonine mark. The next 3 membrane-spanning stretches (helical) occupy residues 29 to 46 (YIGW…TATS), 118 to 133 (HFLL…EWEL), and 142 to 156 (WIAV…AAAA). A chlorophyll a-binding site is contributed by histidine 118. Pheophytin a is bound at residue tyrosine 126. [CaMn4O5] cluster is bound by residues aspartate 170 and glutamate 189. The helical transmembrane segment at 197-218 (FHMLGVAGVFGGSLFSAMHGSL) threads the bilayer. Histidine 198 is a chlorophyll a binding site. Residues histidine 215 and 264–265 (SF) each bind a quinone. Histidine 215 is a Fe cation binding site. Histidine 272 contacts Fe cation. The helical transmembrane segment at 274-288 (FLAAWPVVGIWFTAL) threads the bilayer. Residues histidine 332, glutamate 333, aspartate 342, and alanine 344 each contribute to the [CaMn4O5] cluster site. Positions 345–353 (SVEAPSVKA) are excised as a propeptide.

Belongs to the reaction center PufL/M/PsbA/D family. PSII is composed of 1 copy each of membrane proteins PsbA, PsbB, PsbC, PsbD, PsbE, PsbF, PsbH, PsbI, PsbJ, PsbK, PsbL, PsbM, PsbT, PsbX, PsbY, PsbZ, Psb30/Ycf12, at least 3 peripheral proteins of the oxygen-evolving complex and a large number of cofactors. It forms dimeric complexes. It depends on The D1/D2 heterodimer binds P680, chlorophylls that are the primary electron donor of PSII, and subsequent electron acceptors. It shares a non-heme iron and each subunit binds pheophytin, quinone, additional chlorophylls, carotenoids and lipids. D1 provides most of the ligands for the Mn4-Ca-O5 cluster of the oxygen-evolving complex (OEC). There is also a Cl(-1) ion associated with D1 and D2, which is required for oxygen evolution. The PSII complex binds additional chlorophylls, carotenoids and specific lipids. as a cofactor. Tyr-161 forms a radical intermediate that is referred to as redox-active TyrZ, YZ or Y-Z. Post-translationally, C-terminally processed by CTPA; processing is essential to allow assembly of the oxygen-evolving complex and thus photosynthetic growth.

The protein localises to the plastid. It localises to the chloroplast thylakoid membrane. The enzyme catalyses 2 a plastoquinone + 4 hnu + 2 H2O = 2 a plastoquinol + O2. In terms of biological role, photosystem II (PSII) is a light-driven water:plastoquinone oxidoreductase that uses light energy to abstract electrons from H(2)O, generating O(2) and a proton gradient subsequently used for ATP formation. It consists of a core antenna complex that captures photons, and an electron transfer chain that converts photonic excitation into a charge separation. The D1/D2 (PsbA/PsbD) reaction center heterodimer binds P680, the primary electron donor of PSII as well as several subsequent electron acceptors. This chain is Photosystem II protein D1, found in Angiopteris evecta (Mule's foot fern).